The following is a 352-amino-acid chain: Holliday junction branch migration complex subunit RuvB (352 aa).

Residues 5–191 (TDDFSEQRII…FGIVARLEFY (187 aa)) are large ATPase domain (RuvB-L). Residues L30, R31, G72, K75, T76, T77, 138–140 (EDY), R181, Y191, and R228 each bind ATP. T76 lines the Mg(2+) pocket. The segment at 192–262 (TPLELTKIVT…MADAALVMLD (71 aa)) is small ATPAse domain (RuvB-S). The head domain (RuvB-H) stretch occupies residues 265 to 352 (PVGFDLMDRK…GPNGDLWAGQ (88 aa)). DNA contacts are provided by R301, R320, and R325.

This sequence belongs to the RuvB family. In terms of assembly, homohexamer. Forms an RuvA(8)-RuvB(12)-Holliday junction (HJ) complex. HJ DNA is sandwiched between 2 RuvA tetramers; dsDNA enters through RuvA and exits via RuvB. An RuvB hexamer assembles on each DNA strand where it exits the tetramer. Each RuvB hexamer is contacted by two RuvA subunits (via domain III) on 2 adjacent RuvB subunits; this complex drives branch migration. In the full resolvosome a probable DNA-RuvA(4)-RuvB(12)-RuvC(2) complex forms which resolves the HJ.

The protein resides in the cytoplasm. The enzyme catalyses ATP + H2O = ADP + phosphate + H(+). The RuvA-RuvB-RuvC complex processes Holliday junction (HJ) DNA during genetic recombination and DNA repair, while the RuvA-RuvB complex plays an important role in the rescue of blocked DNA replication forks via replication fork reversal (RFR). RuvA specifically binds to HJ cruciform DNA, conferring on it an open structure. The RuvB hexamer acts as an ATP-dependent pump, pulling dsDNA into and through the RuvAB complex. RuvB forms 2 homohexamers on either side of HJ DNA bound by 1 or 2 RuvA tetramers; 4 subunits per hexamer contact DNA at a time. Coordinated motions by a converter formed by DNA-disengaged RuvB subunits stimulates ATP hydrolysis and nucleotide exchange. Immobilization of the converter enables RuvB to convert the ATP-contained energy into a lever motion, pulling 2 nucleotides of DNA out of the RuvA tetramer per ATP hydrolyzed, thus driving DNA branch migration. The RuvB motors rotate together with the DNA substrate, which together with the progressing nucleotide cycle form the mechanistic basis for DNA recombination by continuous HJ branch migration. Branch migration allows RuvC to scan DNA until it finds its consensus sequence, where it cleaves and resolves cruciform DNA. This Janthinobacterium sp. (strain Marseille) (Minibacterium massiliensis) protein is Holliday junction branch migration complex subunit RuvB.